A 344-amino-acid chain; its full sequence is MGVCGYLFLPWKCLVVVSLRLLFLVPTGVPVRSGDATFPKAMDNVTVRQGESATLRCTIDNRVTRVAWLNRSTILYAGNDKWCLDPRVVLLSNTQTQYSIEIQNVDVYDEGPYTCSVQTDNHPKTSRVHLIVQVSPKIVEISSDISINEGNNISLTCIATGRPEPTVTWRHISPKAVGFVSEDEYLEIQGITREQSGEYECSASNDVAAPVVRRVKVTVNYPPYISEAKGTGVPVGQKGTLQCEASAVPSAEFQWFKDDKRLVEGKKGVKVENRPFLSKLTFFNVSEHDYGNYTCVASNKLGHTNASIMLFGPGAVSEVNNGTSRRAGCIWLLPLLVLHLLLKF.

Positions 1–33 are cleaved as a signal peptide; it reads MGVCGYLFLPWKCLVVVSLRLLFLVPTGVPVRS. Ig-like C2-type domains follow at residues 39–126, 136–218, and 222–309; these read PKAM…PKTS, PKIV…VKVT, and PPYI…ASIM. 3 N-linked (GlcNAc...) asparagine glycosylation sites follow: N44, N70, and N152. Residues C57 and C115 are joined by a disulfide bond. 2 disulfides stabilise this stretch: C157-C201 and C243-C295. N284, N292, and N305 each carry an N-linked (GlcNAc...) asparagine glycan. N321 carries the GPI-anchor amidated asparagine; alternate lipid modification. N321 carries an N-linked (GlcNAc...) asparagine; alternate glycan. The propeptide at 322 to 344 is removed in mature form; it reads GTSRRAGCIWLLPLLVLHLLLKF.

It belongs to the immunoglobulin superfamily. IgLON family.

The protein resides in the cell membrane. Neural cell adhesion molecule. In Mus musculus (Mouse), this protein is Neurotrimin (Ntm).